Here is a 486-residue protein sequence, read N- to C-terminus: Uridine/cytidine kinase UKL1, chloroplastic (486 aa).

A chloroplast-targeting transit peptide spans 1 to 47 (MPEDSSSLDYAMEKASGPHFSGLRFDGLLSSSPPNSSVVSSLRSAVS). Residues 31-54 (SSPPNSSVVSSLRSAVSSSSPSSS) are compositionally biased toward low complexity. A disordered region spans residues 31-67 (SSPPNSSVVSSLRSAVSSSSPSSSDPEAPKQPFIIGV). Residues 59–264 (PKQPFIIGVS…ITQHIHTKLG (206 aa)) form a uridine kinase region. Residues 274-486 (NVYVIQSTFQ…RYFGTDEEDQ (213 aa)) are uracil phosphoribosyltransferase. Residues K298, R307, and 341–344 (CKKL) contribute to the GTP site. Residues R351 and R376 each contribute to the 5-phospho-alpha-D-ribose 1-diphosphate site. R396 is a binding site for GTP. 5-phospho-alpha-D-ribose 1-diphosphate is bound by residues D402, 407 to 410 (TGNS), and E473. Residue 472-474 (GEF) coordinates uracil.

This sequence in the N-terminal section; belongs to the uridine kinase family. In the C-terminal section; belongs to the UPRTase family. In terms of tissue distribution, expressed in roots, leaves and stems.

It is found in the plastid. It localises to the chloroplast. The protein resides in the cytoplasm. The enzyme catalyses cytidine + ATP = CMP + ADP + H(+). It catalyses the reaction uridine + ATP = UMP + ADP + H(+). The protein operates within pyrimidine metabolism; CTP biosynthesis via salvage pathway; CTP from cytidine: step 1/3. It participates in pyrimidine metabolism; UMP biosynthesis via salvage pathway; UMP from uridine: step 1/1. Functionally, involved in the pyrimidine salvage pathway. Phosphorylates uridine to uridine monophosphate (UMP). Phosphorylates cytidine to cytidine monophosphate (CMP). Does not possess uracil phosphoribosyltransferase (UPRTase) activity that catalyzes the conversion of uracil and 5-phospho-alpha-D-ribose 1-diphosphate (PRPP) to UMP and diphosphate. In Arabidopsis thaliana (Mouse-ear cress), this protein is Uridine/cytidine kinase UKL1, chloroplastic.